We begin with the raw amino-acid sequence, 359 residues long: Peptide chain release factor 1 (359 aa).

Residue Gln-235 is modified to N5-methylglutamine.

This sequence belongs to the prokaryotic/mitochondrial release factor family. Post-translationally, methylated by PrmC. Methylation increases the termination efficiency of RF1.

Its subcellular location is the cytoplasm. Functionally, peptide chain release factor 1 directs the termination of translation in response to the peptide chain termination codons UAG and UAA. The chain is Peptide chain release factor 1 from Ehrlichia ruminantium (strain Gardel).